The following is a 471-amino-acid chain: Anthocyanidin 3-O-glucosyltransferase (471 aa).

Residue His-24 is the Proton acceptor of the active site. His-24 provides a ligand contact to an anthocyanidin. The active-site Charge relay is the Asp-130. Thr-152 is a UDP-alpha-D-glucose binding site. Residue His-161 coordinates an anthocyanidin. Residues Ala-352, Gln-354, His-369, Trp-372, Ser-374, and Glu-377 each coordinate UDP-alpha-D-glucose. Gly-392 provides a ligand contact to an anthocyanidin. Residues Asp-393 and Gln-394 each contribute to the UDP-alpha-D-glucose site.

Belongs to the UDP-glycosyltransferase family.

The catalysed reaction is an anthocyanidin + UDP-alpha-D-glucose + H(+) = an anthocyanidin 3-O-beta-D-glucoside + UDP. Its pathway is pigment biosynthesis; anthocyanin biosynthesis. Its function is as follows. In the presence of other necessary color factors, this glycosylation reaction allows the accumulation of anthocyanin pigments. In Zea mays (Maize), this protein is Anthocyanidin 3-O-glucosyltransferase (BZ1).